We begin with the raw amino-acid sequence, 297 residues long: Tumor necrosis factor receptor superfamily member 27 (297 aa).

Topologically, residues 1 to 138 (MDCQENEYWD…TPTVPPQEAT (138 aa)) are extracellular. TNFR-Cys repeat units lie at residues 2 to 41 (DCQE…DAYC), 43 to 83 (ACPP…NAVC), and 85 to 118 (DCLP…EVQC). 8 cysteine pairs are disulfide-bonded: C3–C15, C18–C31, C21–C41, C44–C58, C61–C75, C64–C83, C86–C104, and C107–C118. N74 is a glycosylation site (N-linked (GlcNAc...) asparagine). Residues 139–159 (LVALVSSLLVVFTLAFLGLFF) form a helical; Signal-anchor for type III membrane protein membrane-spanning segment. The Cytoplasmic portion of the chain corresponds to 160 to 297 (LYCKQFFNRH…LNVPFEVPSP (138 aa)). Positions 272–281 (ETLGGNTVES) are enriched in polar residues. Residues 272–297 (ETLGGNTVESTGDRLELNVPFEVPSP) are disordered.

Associates with TRAF1, TRAF3 and TRAF6.

Its subcellular location is the membrane. In terms of biological role, receptor for EDA isoform A2, but not for EDA isoform A1. Mediates the activation of the NF-kappa-B and JNK pathways. Activation seems to be mediated by binding to TRAF3 and TRAF6. This is Tumor necrosis factor receptor superfamily member 27 (EDA2R) from Homo sapiens (Human).